Reading from the N-terminus, the 152-residue chain is UPF0266 membrane protein YobD (152 aa).

The next 3 helical transmembrane spans lie at 6-26 (LVLI…QFIM), 45-65 (VDSV…VTSH), and 67-87 (AQMT…IFWI).

It belongs to the UPF0266 family.

It is found in the cell inner membrane. In Salmonella newport (strain SL254), this protein is UPF0266 membrane protein YobD.